A 549-amino-acid chain; its full sequence is Probable protein kinase UbiB (549 aa).

Positions 123–501 (DFDETPLASA…QQQAHKSNYL (379 aa)) constitute a Protein kinase domain. ATP is bound by residues 129–137 (LASASISQV) and Lys152. The active-site Proton acceptor is the Asp287. 2 consecutive transmembrane segments (helical) span residues 498 to 518 (SNYL…LFNQ) and 520 to 540 (ATLW…IIGW).

It belongs to the ABC1 family. UbiB subfamily.

The protein localises to the cell inner membrane. Its pathway is cofactor biosynthesis; ubiquinone biosynthesis [regulation]. Its function is as follows. Is probably a protein kinase regulator of UbiI activity which is involved in aerobic coenzyme Q (ubiquinone) biosynthesis. This is Probable protein kinase UbiB from Shewanella sp. (strain ANA-3).